The primary structure comprises 452 residues: tRNA modification GTPase MnmE (452 aa).

Residues R25, E82, and R125 each coordinate (6S)-5-formyl-5,6,7,8-tetrahydrofolate. One can recognise a TrmE-type G domain in the interval 221 to 374 (GLHVVLAGKP…LRARLLALAG (154 aa)). N231 is a binding site for K(+). Residues 231–236 (NVGKSS), 250–256 (TPIAGTT), 275–278 (DTAG), and 355–357 (SAR) each bind GTP. S235 is a Mg(2+) binding site. The K(+) site is built by T250, I252, and T255. A Mg(2+)-binding site is contributed by T256. K452 serves as a coordination point for (6S)-5-formyl-5,6,7,8-tetrahydrofolate.

Belongs to the TRAFAC class TrmE-Era-EngA-EngB-Septin-like GTPase superfamily. TrmE GTPase family. Homodimer. Heterotetramer of two MnmE and two MnmG subunits. It depends on K(+) as a cofactor.

It localises to the cytoplasm. Functionally, exhibits a very high intrinsic GTPase hydrolysis rate. Involved in the addition of a carboxymethylaminomethyl (cmnm) group at the wobble position (U34) of certain tRNAs, forming tRNA-cmnm(5)s(2)U34. This chain is tRNA modification GTPase MnmE, found in Bordetella petrii (strain ATCC BAA-461 / DSM 12804 / CCUG 43448).